We begin with the raw amino-acid sequence, 437 residues long: Methylenetetrahydrofolate--tRNA-(uracil-5-)-methyltransferase TrmFO (437 aa).

10 to 15 (GAGLAG) contacts FAD.

Belongs to the MnmG family. TrmFO subfamily. The cofactor is FAD.

The protein resides in the cytoplasm. It carries out the reaction uridine(54) in tRNA + (6R)-5,10-methylene-5,6,7,8-tetrahydrofolate + NADH + H(+) = 5-methyluridine(54) in tRNA + (6S)-5,6,7,8-tetrahydrofolate + NAD(+). The catalysed reaction is uridine(54) in tRNA + (6R)-5,10-methylene-5,6,7,8-tetrahydrofolate + NADPH + H(+) = 5-methyluridine(54) in tRNA + (6S)-5,6,7,8-tetrahydrofolate + NADP(+). In terms of biological role, catalyzes the folate-dependent formation of 5-methyl-uridine at position 54 (M-5-U54) in all tRNAs. The sequence is that of Methylenetetrahydrofolate--tRNA-(uracil-5-)-methyltransferase TrmFO from Brevibacillus brevis (strain 47 / JCM 6285 / NBRC 100599).